The sequence spans 384 residues: 2-isopropylmalate synthase 2 (384 aa).

A Pyruvate carboxyltransferase domain is found at 9–260; that stretch reads VYIVDTTLRD…DLGIDTSRFR (252 aa). Residues aspartate 18, histidine 198, histidine 200, and asparagine 234 each coordinate Mn(2+).

The protein belongs to the alpha-IPM synthase/homocitrate synthase family. LeuA type 1 subfamily. Homodimer. Mn(2+) is required as a cofactor.

The protein resides in the cytoplasm. It carries out the reaction 3-methyl-2-oxobutanoate + acetyl-CoA + H2O = (2S)-2-isopropylmalate + CoA + H(+). It participates in amino-acid biosynthesis; L-leucine biosynthesis; L-leucine from 3-methyl-2-oxobutanoate: step 1/4. Functionally, catalyzes the condensation of the acetyl group of acetyl-CoA with 3-methyl-2-oxobutanoate (2-ketoisovalerate) to form 3-carboxy-3-hydroxy-4-methylpentanoate (2-isopropylmalate). The polypeptide is 2-isopropylmalate synthase 2 (Caldanaerobacter subterraneus subsp. tengcongensis (strain DSM 15242 / JCM 11007 / NBRC 100824 / MB4) (Thermoanaerobacter tengcongensis)).